A 296-amino-acid polypeptide reads, in one-letter code: ATP synthase gamma chain (296 aa).

This sequence belongs to the ATPase gamma chain family. In terms of assembly, F-type ATPases have 2 components, CF(1) - the catalytic core - and CF(0) - the membrane proton channel. CF(1) has five subunits: alpha(3), beta(3), gamma(1), delta(1), epsilon(1). CF(0) has three main subunits: a, b and c.

Its subcellular location is the cell inner membrane. Functionally, produces ATP from ADP in the presence of a proton gradient across the membrane. The gamma chain is believed to be important in regulating ATPase activity and the flow of protons through the CF(0) complex. This chain is ATP synthase gamma chain, found in Rhodopirellula baltica (strain DSM 10527 / NCIMB 13988 / SH1).